The sequence spans 2968 residues: Polyketide synthase 37 (2968 aa).

Residues 32 to 454 (KEPIAIIGIG…GSNSSLFLSS (423 aa)) enclose the Ketosynthase family 3 (KS3) domain. Residues cysteine 198, histidine 338, and histidine 378 each act as for beta-ketoacyl synthase activity in the active site. A malonyl-CoA:ACP transacylase (MAT) domain region spans residues 624–950 (FIFSGQGQQW…LSTLSKNSNS (327 aa)). Residue serine 718 is the For malonyltransferase activity of the active site. Residues 1017–1157 (PPMFISLDRK…GIIKYGTNYL (141 aa)) are N-terminal hotdog fold. Residues 1017-1350 (PPMFISLDRK…FKGINSSSSS (334 aa)) form the PKS/mFAS DH domain. A dehydratase (DH) domain region spans residues 1031–1345 (TPSFEVRLNQ…LTNLEFKGIN (315 aa)). Histidine 1049 acts as the Proton acceptor; for dehydratase activity in catalysis. Residues 1183–1350 (FKSFNSNEFY…FKGINSSSSS (168 aa)) are C-terminal hotdog fold. The Proton donor; for dehydratase activity role is filled by aspartate 1257. Positions 1522–1547 (SCGGGGGSTNNTISNSSSSISSIDNG) are disordered. Over residues 1530–1547 (TNNTISNSSSSISSIDNG) the composition is skewed to low complexity. An enoyl reductase (ER) domain region spans residues 1718 to 2053 (GIISDLKIKQ…SGNHIGKILI (336 aa)). The segment at 2083–2277 (TYIFTGFGGL…LKSSCIHLAS (195 aa)) is ketoreductase (KR) domain. Residues 2379-2400 (GDGSFDDLNQLEDEGQQGFGNG) are disordered. The region spanning 2421–2498 (FDNDFYTKSI…STVELIKNKL (78 aa)) is the Carrier domain. Serine 2458 is subject to O-(pantetheine 4'-phosphoryl)serine. The tract at residues 2568-2589 (SSSSNNSNSKNELTSPPPSAKR) is disordered. The segment at 2707–2968 (ISHVVGVTST…IEAILFKLIK (262 aa)) is chalcone synthase. Cysteine 2747 is an active-site residue.

Pantetheine 4'-phosphate serves as cofactor.

It catalyses the reaction (E)-4-coumaroyl-CoA + 3 malonyl-CoA + 3 H(+) = 2',4,4',6'-tetrahydroxychalcone + 3 CO2 + 4 CoA. The catalysed reaction is hexanoyl-CoA + 3 malonyl-CoA + 3 H(+) = 2,4,6-trihydroxyphenylhexan-1-one + 3 CO2 + 4 CoA. It functions in the pathway secondary metabolite biosynthesis; flavonoid biosynthesis. Functionally, polyketide synthase; part of the gene cluster that mediates the biosynthesis of DIF-1 (Differentiation Inducing Factor-1), a signal molecule involved in the differentiation of pstO (prestalk-O) cells. The three-step process begins with the formation of (2,4,6-trihydroxyphenyl)-1-hexan-1-one (THPH) by the polyketide synthase StlB. THPH is then dichlorinated by the flavin-dependent halogenase ChlA. The last step of DIF-1 biosynthesis is the O-methylation of dichloro-THPH (or des-methyl-DIF-1) by the methyltransferase DmtA to yield DIF-1. This is Polyketide synthase 37 (StlB) from Dictyostelium discoideum (Social amoeba).